We begin with the raw amino-acid sequence, 185 residues long: Orotate phosphoribosyltransferase (185 aa).

Residues arginine 99, lysine 100, lysine 103, and 125-133 each bind 5-phospho-alpha-D-ribose 1-diphosphate; that span reads EDVTTTGGS. Positions 129 and 157 each coordinate orotate.

The protein belongs to the purine/pyrimidine phosphoribosyltransferase family. PyrE subfamily. In terms of assembly, homodimer. Mg(2+) is required as a cofactor.

The catalysed reaction is orotidine 5'-phosphate + diphosphate = orotate + 5-phospho-alpha-D-ribose 1-diphosphate. It participates in pyrimidine metabolism; UMP biosynthesis via de novo pathway; UMP from orotate: step 1/2. In terms of biological role, catalyzes the transfer of a ribosyl phosphate group from 5-phosphoribose 1-diphosphate to orotate, leading to the formation of orotidine monophosphate (OMP). The protein is Orotate phosphoribosyltransferase of Methanococcus maripaludis (strain DSM 14266 / JCM 13030 / NBRC 101832 / S2 / LL).